A 246-amino-acid chain; its full sequence is Pyridoxine 5'-phosphate synthase (246 aa).

Position 12 (asparagine 12) interacts with 3-amino-2-oxopropyl phosphate. A 1-deoxy-D-xylulose 5-phosphate-binding site is contributed by 14-15 (DH). 3-amino-2-oxopropyl phosphate is bound at residue arginine 23. Histidine 48 serves as the catalytic Proton acceptor. The 1-deoxy-D-xylulose 5-phosphate site is built by arginine 50 and histidine 55. Glutamate 75 (proton acceptor) is an active-site residue. Residue threonine 105 coordinates 1-deoxy-D-xylulose 5-phosphate. The active-site Proton donor is histidine 196. Residues glycine 197 and 218–219 (GH) each bind 3-amino-2-oxopropyl phosphate.

It belongs to the PNP synthase family. Homooctamer; tetramer of dimers.

The protein localises to the cytoplasm. It catalyses the reaction 3-amino-2-oxopropyl phosphate + 1-deoxy-D-xylulose 5-phosphate = pyridoxine 5'-phosphate + phosphate + 2 H2O + H(+). It functions in the pathway cofactor biosynthesis; pyridoxine 5'-phosphate biosynthesis; pyridoxine 5'-phosphate from D-erythrose 4-phosphate: step 5/5. Catalyzes the complicated ring closure reaction between the two acyclic compounds 1-deoxy-D-xylulose-5-phosphate (DXP) and 3-amino-2-oxopropyl phosphate (1-amino-acetone-3-phosphate or AAP) to form pyridoxine 5'-phosphate (PNP) and inorganic phosphate. This chain is Pyridoxine 5'-phosphate synthase, found in Pseudomonas savastanoi pv. phaseolicola (strain 1448A / Race 6) (Pseudomonas syringae pv. phaseolicola (strain 1448A / Race 6)).